Reading from the N-terminus, the 225-residue chain is NAD(P)H-quinone oxidoreductase subunit K, chloroplastic (225 aa).

[4Fe-4S] cluster-binding residues include C43, C44, C108, and C139.

This sequence belongs to the complex I 20 kDa subunit family. In terms of assembly, NDH is composed of at least 16 different subunits, 5 of which are encoded in the nucleus. The cofactor is [4Fe-4S] cluster.

The protein resides in the plastid. It localises to the chloroplast thylakoid membrane. The catalysed reaction is a plastoquinone + NADH + (n+1) H(+)(in) = a plastoquinol + NAD(+) + n H(+)(out). The enzyme catalyses a plastoquinone + NADPH + (n+1) H(+)(in) = a plastoquinol + NADP(+) + n H(+)(out). Its function is as follows. NDH shuttles electrons from NAD(P)H:plastoquinone, via FMN and iron-sulfur (Fe-S) centers, to quinones in the photosynthetic chain and possibly in a chloroplast respiratory chain. The immediate electron acceptor for the enzyme in this species is believed to be plastoquinone. Couples the redox reaction to proton translocation, and thus conserves the redox energy in a proton gradient. The polypeptide is NAD(P)H-quinone oxidoreductase subunit K, chloroplastic (Illicium oligandrum (Star anise)).